Consider the following 104-residue polypeptide: Integration host factor subunit beta (104 aa).

It belongs to the bacterial histone-like protein family. Heterodimer of an alpha and a beta chain.

In terms of biological role, this protein is one of the two subunits of integration host factor, a specific DNA-binding protein that functions in genetic recombination as well as in transcriptional and translational control. In Xylella fastidiosa (strain M23), this protein is Integration host factor subunit beta.